A 382-amino-acid polypeptide reads, in one-letter code: Galactokinase (382 aa).

Residue 34–37 (EHTD) participates in substrate binding. Position 124-130 (124-130 (GAGLSSS)) interacts with ATP. 2 residues coordinate Mg(2+): Ser-130 and Glu-162. Catalysis depends on Asp-174, which acts as the Proton acceptor. A substrate-binding site is contributed by Tyr-223.

It belongs to the GHMP kinase family. GalK subfamily.

It localises to the cytoplasm. It carries out the reaction alpha-D-galactose + ATP = alpha-D-galactose 1-phosphate + ADP + H(+). Its pathway is carbohydrate metabolism; galactose metabolism. In terms of biological role, catalyzes the transfer of the gamma-phosphate of ATP to D-galactose to form alpha-D-galactose-1-phosphate (Gal-1-P). This Shigella dysenteriae serotype 1 (strain Sd197) protein is Galactokinase.